The primary structure comprises 561 residues: Acyl-CoA ligase ppsA (561 aa).

Asn-21 carries N-linked (GlcNAc...) asparagine glycosylation. Residues 71–91 (SILYPALFLAIVGVGAVYMGA) traverse the membrane as a helical segment. AMP is bound at residue 203-214 (MFATSGTSGLPK). A glycan (N-linked (GlcNAc...) asparagine) is linked at Asn-396. The segment at 462-540 (ELEAELAQHP…DSIPRNSGGK (79 aa)) is AMP-binding.

The protein belongs to the ATP-dependent AMP-binding enzyme family.

It localises to the membrane. The catalysed reaction is acetate + ATP + CoA = acetyl-CoA + ADP + phosphate. It catalyses the reaction propanoate + ATP + CoA = propanoyl-CoA + AMP + diphosphate. Its pathway is secondary metabolite biosynthesis. Acyl-CoA ligase; part of the gene cluster that mediates the biosynthesis of 2,4'-dihydroxy-3'-methoxypropiophenone. The first step of the pathway is the conversion of acetate into acetyl-CoA by the acyl-CoA ligase ppsA. Acetyl-CoA is then used as a starter unit by the polyketide synthase ppsB and condensed with 4 malonyl-CoA unit to produce the pentaketide backbone. During polyketide extension, the polykedite chain is probably reduced and dehydrated by the KR and PT domains, respectively. O-methylation seems to be catalyzed by an unknown methyltransferase rather than by the CMeT domain of ppsB. Two hydroxylations and one further decarboxylation step catalyzed by yet unknown enzymes are then required to yield 4'-hydroxy-3'-methoxypropiophenone. PpsC functions as a carrier protein to transport 4'-hydroxy-3'-methoxypropiophenone to a specific cell compartment in which 4'-hydroxy-3'-methoxypropiophenone is hydroxylated to 2,4'-dihydroxy-3'-methoxypropiophenone by a still to be identified enzyme. In Aspergillus oryzae (strain ATCC 42149 / RIB 40) (Yellow koji mold), this protein is Acyl-CoA ligase ppsA.